Reading from the N-terminus, the 559-residue chain is Probable D-2-hydroxyglutarate dehydrogenase, mitochondrial (559 aa).

Residues 1-80 (MARRAAAGLL…MNFEVQKRSF (80 aa)) constitute a mitochondrion transit peptide. Residues 131–310 (YKGSSQLLLL…TKIAILTPAK (180 aa)) form the FAD-binding PCMH-type domain.

This sequence belongs to the FAD-binding oxidoreductase/transferase type 4 family. In terms of assembly, homodimer. The cofactor is FAD.

It is found in the mitochondrion. The enzyme catalyses (R)-2-hydroxyglutarate + A = 2-oxoglutarate + AH2. Catalyzes the oxidation of D-2-hydroxyglutarate to alpha-ketoglutarate. The polypeptide is Probable D-2-hydroxyglutarate dehydrogenase, mitochondrial (D2HGDH) (Oryza sativa subsp. japonica (Rice)).